The chain runs to 361 residues: Phosphoserine aminotransferase (361 aa).

Arg42 provides a ligand contact to L-glutamate. Pyridoxal 5'-phosphate is bound by residues 76-77 (AS), Trp102, Thr152, Asp172, and Gln195. Residue Lys196 is modified to N6-(pyridoxal phosphate)lysine. 237-238 (NT) serves as a coordination point for pyridoxal 5'-phosphate.

The protein belongs to the class-V pyridoxal-phosphate-dependent aminotransferase family. SerC subfamily. In terms of assembly, homodimer. The cofactor is pyridoxal 5'-phosphate.

Its subcellular location is the cytoplasm. It catalyses the reaction O-phospho-L-serine + 2-oxoglutarate = 3-phosphooxypyruvate + L-glutamate. The catalysed reaction is 4-(phosphooxy)-L-threonine + 2-oxoglutarate = (R)-3-hydroxy-2-oxo-4-phosphooxybutanoate + L-glutamate. It functions in the pathway amino-acid biosynthesis; L-serine biosynthesis; L-serine from 3-phospho-D-glycerate: step 2/3. Catalyzes the reversible conversion of 3-phosphohydroxypyruvate to phosphoserine and of 3-hydroxy-2-oxo-4-phosphonooxybutanoate to phosphohydroxythreonine. The sequence is that of Phosphoserine aminotransferase from Halalkalibacterium halodurans (strain ATCC BAA-125 / DSM 18197 / FERM 7344 / JCM 9153 / C-125) (Bacillus halodurans).